We begin with the raw amino-acid sequence, 267 residues long: Ribosomal RNA small subunit methyltransferase A (267 aa).

Positions 12, 14, 39, 60, 84, and 110 each coordinate S-adenosyl-L-methionine.

It belongs to the class I-like SAM-binding methyltransferase superfamily. rRNA adenine N(6)-methyltransferase family. RsmA subfamily.

The protein localises to the cytoplasm. The enzyme catalyses adenosine(1518)/adenosine(1519) in 16S rRNA + 4 S-adenosyl-L-methionine = N(6)-dimethyladenosine(1518)/N(6)-dimethyladenosine(1519) in 16S rRNA + 4 S-adenosyl-L-homocysteine + 4 H(+). Its function is as follows. Specifically dimethylates two adjacent adenosines (A1518 and A1519) in the loop of a conserved hairpin near the 3'-end of 16S rRNA in the 30S particle. May play a critical role in biogenesis of 30S subunits. In Mesoplasma florum (strain ATCC 33453 / NBRC 100688 / NCTC 11704 / L1) (Acholeplasma florum), this protein is Ribosomal RNA small subunit methyltransferase A.